Reading from the N-terminus, the 289-residue chain is Trihelix transcription factor GT-3b (289 aa).

A Myb-like domain is found at 42 to 98; sequence WSVEETKELIGIRGELDQTFMETKRNKLLWEVISNKMRDKSFPRSPEQCKCKWKNLV. Positions 65-81 match the Bipartite nuclear localization signal motif; it reads KRNKLLWEVISNKMRDK. Residues 137 to 200 are disordered; that stretch reads ESEGGGGGTS…SNSSNSNNGV (64 aa). Residues 156–168 show a composition bias toward acidic residues; the sequence is SDEEEENVNEELV. The short motif at 179 to 188 is the Nuclear localization signal element; it reads PKKNIAKKRK. Residues 190-199 are compositionally biased toward low complexity; the sequence is GSNSSNSNNG. The stretch at 223 to 275 forms a coiled coil; the sequence is EAREKERAEKEEEWRRKMEELEKERLAMERMWRDREEQRRSREEMRAEKRDSL.

In terms of assembly, heterodimer with GT-3A. Associated with the mediator complex.

The protein localises to the nucleus. Its function is as follows. Probable transcription factor that may play a role in the induction of CAM4 in response to pathogen and salt. The sequence is that of Trihelix transcription factor GT-3b (GT-3B) from Arabidopsis thaliana (Mouse-ear cress).